The following is a 346-amino-acid chain: UPF0324 membrane protein FN0533 (346 aa).

A run of 10 helical transmembrane segments spans residues 5–22 (LYGI…WKLG), 27–49 (LVGG…KNRA), 62–81 (VLQY…TIIS), 86–108 (SLPI…AKLI), 115–137 (VILI…APVI), 147–169 (AISV…GDIL), 216–233 (LTRT…AVYN), 248–270 (IFPM…NYFI), 283–305 (INNV…MVAI), and 315–337 (ILSG…LVSI).

The protein belongs to the UPF0324 family.

Its subcellular location is the cell membrane. The polypeptide is UPF0324 membrane protein FN0533 (Fusobacterium nucleatum subsp. nucleatum (strain ATCC 25586 / DSM 15643 / BCRC 10681 / CIP 101130 / JCM 8532 / KCTC 2640 / LMG 13131 / VPI 4355)).